A 258-amino-acid polypeptide reads, in one-letter code: Chaperone protein caf1M (258 aa).

The first 20 residues, 1-20, serve as a signal peptide directing secretion; it reads MILNRLSTLGIITFGMLSFA. Cys121 and Cys160 are joined by a disulfide.

This sequence belongs to the periplasmic pilus chaperone family.

It localises to the periplasm. Functionally, has a stimulatory role for the envelope antigen F1 secretion. It seems to interact with the subunit polypeptide and to prevent it from digestion by a protease. This is Chaperone protein caf1M (caf1M) from Yersinia pestis.